We begin with the raw amino-acid sequence, 921 residues long: Isoleucine--tRNA ligase (921 aa).

The 'HIGH' region motif lies at 57–67; the sequence is PYANGDIHMGH. Glu552 is a binding site for L-isoleucyl-5'-AMP. The 'KMSKS' region signature appears at 593–597; it reads KMSKS. Position 596 (Lys596) interacts with ATP. 4 residues coordinate Zn(2+): Cys888, Cys891, Cys908, and Cys911.

It belongs to the class-I aminoacyl-tRNA synthetase family. IleS type 1 subfamily. In terms of assembly, monomer. Zn(2+) serves as cofactor.

The protein resides in the cytoplasm. The catalysed reaction is tRNA(Ile) + L-isoleucine + ATP = L-isoleucyl-tRNA(Ile) + AMP + diphosphate. Catalyzes the attachment of isoleucine to tRNA(Ile). As IleRS can inadvertently accommodate and process structurally similar amino acids such as valine, to avoid such errors it has two additional distinct tRNA(Ile)-dependent editing activities. One activity is designated as 'pretransfer' editing and involves the hydrolysis of activated Val-AMP. The other activity is designated 'posttransfer' editing and involves deacylation of mischarged Val-tRNA(Ile). This chain is Isoleucine--tRNA ligase, found in Bacillus cereus (strain AH187).